Here is a 176-residue protein sequence, read N- to C-terminus: Odorant-binding protein 2a (176 aa).

The signal sequence occupies residues 1-19 (MKSLLLTILLLGLVAVLKA). 2 N-linked (GlcNAc...) asparagine glycosylation sites follow: Asn-42 and Asn-124. Cys-79 and Cys-172 are oxidised to a cystine.

This sequence belongs to the calycin superfamily. Lipocalin family. Expressed in the liver (at protein level). Expressed in epididymis.

It is found in the secreted. Its function is as follows. Involved in the regulation of systematic glucose homeostasis and insulin sensitivity. Involved in the regulation of liver lipid levels by positive regulation of hepatic lipogenesis and negative regulation of fatty acid beta-oxidation; via downstream transcriptional regulation of CPT1A and hepatic lipogenic program gene expression. May regulate hepatic lipogenesis and fatty acid beta-oxidation in an autocrine or paracrine manner. The sequence is that of Odorant-binding protein 2a (Obp2a) from Mus musculus (Mouse).